Consider the following 37-residue polypeptide: Large ribosomal subunit protein bL36 (37 aa).

Belongs to the bacterial ribosomal protein bL36 family.

This is Large ribosomal subunit protein bL36 from Leptothrix cholodnii (strain ATCC 51168 / LMG 8142 / SP-6) (Leptothrix discophora (strain SP-6)).